A 288-amino-acid chain; its full sequence is Store-operated calcium entry regulator STIMATE (288 aa).

Residues 1–28 (MQGPGGNVSRGLPGGPASTVASGAGRCE) lie on the Cytoplasmic side of the membrane. 3 consecutive transmembrane segments (helical) span residues 29 to 49 (SGAL…VVAF), 69 to 89 (IWFL…FANV), and 102 to 122 (LYLI…YVGV). The GXXXG motif motif lies at 149–153 (GAWVG). Transmembrane regions (helical) follow at residues 156–176 (ALYI…LLIL) and 194–214 (LAIV…WVVD). Over 215 to 288 (NFLMRKGKTK…KKKHRFGLPV (74 aa)) the chain is Cytoplasmic. The interval 228–288 (EERGANQDSR…KKKHRFGLPV (61 aa)) is disordered. Positions 241–246 (KVRYRR) are required for localization in the endoplasmic reticulum. Residues 261 to 272 (ADDEMEESDAEE) are compositionally biased toward acidic residues. Basic residues predominate over residues 277–288 (PVKKKHRFGLPV).

It belongs to the STIMATE family. In terms of assembly, homooligomer. Interacts with STIM1.

Its subcellular location is the endoplasmic reticulum membrane. In terms of biological role, acts as a regulator of store-operated Ca(2+) entry (SOCE) at junctional sites that connect the endoplasmic reticulum (ER) and plasma membrane (PM), called ER-plasma membrane (ER-PM) junction or cortical ER. SOCE is a Ca(2+) influx following depletion of intracellular Ca(2+) stores. Acts by interacting with STIM1, promoting STIM1 conformational switch. Involved in STIM1 relocalization to ER-PM junctions. Contributes to the maintenance and reorganization of store-dependent ER-PM junctions. This chain is Store-operated calcium entry regulator STIMATE, found in Rattus norvegicus (Rat).